The following is a 198-amino-acid chain: uncharacterized protein (198 aa).

4 helical membrane-spanning segments follow: residues 20-40, 70-90, 107-127, and 164-184; these read VIVGVVLGLAGTGALIGGLWA, FFVAPCLMLGLLTVLAVTASV, LAIGLMICAATAAAVGALLVW, and VAATVLWPAGIAALVYAVLAA.

The protein to M.tuberculosis Rv1591.

The protein resides in the cell membrane. This is an uncharacterized protein from Mycobacterium leprae (strain TN).